The sequence spans 370 residues: Protein STRICTOSIDINE SYNTHASE-LIKE 4 (370 aa).

The N-terminal stretch at 1–21 (MVLFFSTRFLFFSIFFPCLIS) is a signal peptide. N101 carries N-linked (GlcNAc...) asparagine glycosylation. Y303 carries the post-translational modification Phosphotyrosine.

This sequence belongs to the strictosidine synthase family.

The protein localises to the vacuole. The protein is Protein STRICTOSIDINE SYNTHASE-LIKE 4 of Arabidopsis thaliana (Mouse-ear cress).